A 435-amino-acid chain; its full sequence is Adenylosuccinate synthetase (435 aa).

Residues 13-19 (GDEGKGK) and 41-43 (GHT) contribute to the GTP site. Aspartate 14 (proton acceptor) is an active-site residue. Mg(2+) contacts are provided by aspartate 14 and glycine 41. IMP contacts are provided by residues 14–17 (DEGK), 39–42 (NAGH), threonine 130, arginine 144, glutamine 225, threonine 240, and arginine 304. The active-site Proton donor is the histidine 42. 300-306 (ATTGRPR) is a binding site for substrate. Residues arginine 306, 332–334 (KLD), and 419–421 (STG) each bind GTP.

Belongs to the adenylosuccinate synthetase family. As to quaternary structure, homodimer. Requires Mg(2+) as cofactor.

Its subcellular location is the cytoplasm. The enzyme catalyses IMP + L-aspartate + GTP = N(6)-(1,2-dicarboxyethyl)-AMP + GDP + phosphate + 2 H(+). Its pathway is purine metabolism; AMP biosynthesis via de novo pathway; AMP from IMP: step 1/2. Its function is as follows. Plays an important role in the de novo pathway of purine nucleotide biosynthesis. Catalyzes the first committed step in the biosynthesis of AMP from IMP. The protein is Adenylosuccinate synthetase of Nitrosospira multiformis (strain ATCC 25196 / NCIMB 11849 / C 71).